A 206-amino-acid polypeptide reads, in one-letter code: uncharacterized protein (206 aa).

The disordered stretch occupies residues 147–206 (REEKAQKSKSKSRNQDERGSPLDERLGPKVSDLTLMERIFQVRRKPRKSRRDRRSRVSKR). The segment covering 159-173 (RNQDERGSPLDERLG) has biased composition (basic and acidic residues). Residues 187 to 206 (QVRRKPRKSRRDRRSRVSKR) are compositionally biased toward basic residues.

This is an uncharacterized protein from Schizosaccharomyces pombe (strain 972 / ATCC 24843) (Fission yeast).